Reading from the N-terminus, the 307-residue chain is D-alanine--D-alanine ligase (307 aa).

In terms of domain architecture, ATP-grasp spans 104–301 (RTAFLAAGLP…FVSLCRWMVE (198 aa)). 130-183 (PLPRPFVIKPANEGSAVGVHILHEGDNRRTEIARSWSFGGQALVEEYIPGRELT) serves as a coordination point for ATP. Mg(2+) contacts are provided by Asp-251, Glu-268, and Asn-270.

Belongs to the D-alanine--D-alanine ligase family. It depends on Mg(2+) as a cofactor. Mn(2+) is required as a cofactor.

It is found in the cytoplasm. The catalysed reaction is 2 D-alanine + ATP = D-alanyl-D-alanine + ADP + phosphate + H(+). Its pathway is cell wall biogenesis; peptidoglycan biosynthesis. In terms of biological role, cell wall formation. This Granulibacter bethesdensis (strain ATCC BAA-1260 / CGDNIH1) protein is D-alanine--D-alanine ligase.